A 329-amino-acid chain; its full sequence is MEPITIPTDRDGVAYLYGHPLRNSLSPPLHQTVYNALGLNWTQIPLSTATGTSFTRSPEISTFLSSVRSNPKFVGSSVTMPWKVAIMPHLDDLTEDARQAGACNTIYLRKEDDGKTQYVGTNTDCIGIREALLQGSPNGAEHFKGKPALIVGGGGTARTAIYVLRKWLGVSKIYIVNRDAKEVEAILAEDKQRNPSPQVALVPVSDPSAAATLEAPVAVVSGIPNYPPQTEEEIRARETLRVFLNRQTHEKDQGVILEMCYHPLPWTDIAQIAQDARWKVILGSEALIWQGLEQARLWTGKDVVSEPGLVEKVQAFVAQTIAERSKSNL.

It carries out the reaction L-quinate + NAD(+) = 3-dehydroquinate + NADH + H(+). Its pathway is aromatic compound metabolism; 3,4-dihydroxybenzoate biosynthesis; 3-dehydroquinate from D-quinate (NAD(+) route): step 1/1. The sequence is that of Quinate dehydrogenase (qutB) from Emericella nidulans (strain FGSC A4 / ATCC 38163 / CBS 112.46 / NRRL 194 / M139) (Aspergillus nidulans).